Consider the following 290-residue polypeptide: Ig delta chain C region membrane-bound form (290 aa).

The region spanning 5-105 is the Ig-like 1 domain; sequence PDMFLLSECK…WDSQSSKRVT (101 aa). A disulfide bridge connects residues Cys-26 and Cys-78. N-linked (GlcNAc...) asparagine glycosylation is found at Asn-58 and Asn-75. A disordered region spans residues 89-111; the sequence is PFKFPESWDSQSSKRVTPTLQAK. Positions 96 to 111 are enriched in polar residues; it reads WDSQSSKRVTPTLQAK. Residues Asn-112, Asn-135, and Asn-227 are each glycosylated (N-linked (GlcNAc...) asparagine). In terms of domain architecture, Ig-like 2 spans 133–233; that stretch reads PSNLTVNILT…TKLNASKSLA (101 aa). Residues 262–279 form a helical membrane-spanning segment; sequence GLWPTMCTFVALFLLTLL. The Cytoplasmic portion of the chain corresponds to 280 to 290; the sequence is YSGFVTFIKVK.

As to expression, cell lines producing IgD contain several mRNA species for Ig delta chains. In plasmacytomas, the secreted form is the major component, and the membrane-bound form is a minor component. In spleen, however, the membrane-bound form is the major component. These two forms differ in their C-terminal segments.

The protein resides in the cell membrane. This is Ig delta chain C region membrane-bound form from Mus musculus (Mouse).